Reading from the N-terminus, the 107-residue chain is Glutaredoxin-1 (107 aa).

Ala2 carries the N-acetylalanine modification. The Glutaredoxin domain occupies 3-106; that stretch reads QEFVNCKIQS…ARLKQIGALQ (104 aa). Position 9 is an N6-succinyllysine (Lys9). 2 cysteine pairs are disulfide-bonded: Cys23-Cys26 and Cys79-Cys83.

Belongs to the glutaredoxin family.

The protein resides in the cytoplasm. Its function is as follows. Has a glutathione-disulfide oxidoreductase activity in the presence of NADPH and glutathione reductase. Reduces low molecular weight disulfides and proteins. The protein is Glutaredoxin-1 (Glrx) of Rattus norvegicus (Rat).